The primary structure comprises 299 residues: Putative cuticle collagen 155 (299 aa).

An N-terminal signal peptide occupies residues 1–27 (MEFEQRIKAYRFVAYSAVAFSVVAVLS). Triple-helical region stretches follow at residues 103–132 (GAAG…PGHP), 151–177 (GPPG…PGQD), 181–202 (GAPG…GAPG), and 216–278 (GAPG…VGEK). The interval 107 to 278 (PAGTPGKPGR…SGTPGGVGEK (172 aa)) is disordered. Over residues 129 to 161 (PGHPPQQPCDPITPPPCQPCPQGPPGPPGPPGP) the composition is skewed to pro residues. Over residues 163–172 (GDAGGNGNPG) the composition is skewed to gly residues. A compositionally biased stretch (low complexity) spans 173-197 (SPGQDGQPGAPGNKGPSGPNGNPGA). Residues 215–233 (PGAPGPQGTPGPQGPPGQP) show a composition bias toward pro residues. Residues 250 to 268 (PNGNPGQPGADGNPGAPGQ) are compositionally biased toward low complexity.

It belongs to the cuticular collagen family. In terms of assembly, collagen polypeptide chains are complexed within the cuticle by disulfide bonds and other types of covalent cross-links.

Its function is as follows. Nematode cuticles are composed largely of collagen-like proteins. The cuticle functions both as an exoskeleton and as a barrier to protect the worm from its environment. This Caenorhabditis elegans protein is Putative cuticle collagen 155 (col-155).